Here is a 332-residue protein sequence, read N- to C-terminus: Glycerol-3-phosphate dehydrogenase [NAD(P)+] (332 aa).

NADPH-binding residues include Ser-11, Phe-12, Lys-32, and Lys-106. Lys-106, Gly-137, and Ser-139 together coordinate sn-glycerol 3-phosphate. Residue Ala-141 coordinates NADPH. Positions 192, 245, 255, 256, and 257 each coordinate sn-glycerol 3-phosphate. Lys-192 serves as the catalytic Proton acceptor. Arg-256 contacts NADPH. The NADPH site is built by Val-280 and Glu-282.

The protein belongs to the NAD-dependent glycerol-3-phosphate dehydrogenase family.

The protein resides in the cytoplasm. The catalysed reaction is sn-glycerol 3-phosphate + NAD(+) = dihydroxyacetone phosphate + NADH + H(+). It carries out the reaction sn-glycerol 3-phosphate + NADP(+) = dihydroxyacetone phosphate + NADPH + H(+). Its pathway is membrane lipid metabolism; glycerophospholipid metabolism. Catalyzes the reduction of the glycolytic intermediate dihydroxyacetone phosphate (DHAP) to sn-glycerol 3-phosphate (G3P), the key precursor for phospholipid synthesis. In Staphylococcus saprophyticus subsp. saprophyticus (strain ATCC 15305 / DSM 20229 / NCIMB 8711 / NCTC 7292 / S-41), this protein is Glycerol-3-phosphate dehydrogenase [NAD(P)+].